We begin with the raw amino-acid sequence, 644 residues long: Exoribonuclease 2 (644 aa).

One can recognise an RNB domain in the interval 189-516 (REDLTALDFV…NHRLLKAVIK (328 aa)). The 83-residue stretch at 561 to 643 (DTRFAAEIVD…ETRSIIARPV (83 aa)) folds into the S1 motif domain.

This sequence belongs to the RNR ribonuclease family. RNase II subfamily.

The protein resides in the cytoplasm. It catalyses the reaction Exonucleolytic cleavage in the 3'- to 5'-direction to yield nucleoside 5'-phosphates.. Functionally, involved in mRNA degradation. Hydrolyzes single-stranded polyribonucleotides processively in the 3' to 5' direction. The chain is Exoribonuclease 2 from Escherichia coli (strain ATCC 8739 / DSM 1576 / NBRC 3972 / NCIMB 8545 / WDCM 00012 / Crooks).